A 93-amino-acid chain; its full sequence is Probable endoribonuclease MazF1 (93 aa).

Belongs to the PemK/MazF family. As to quaternary structure, forms a complex with cognate antitoxin MazE1.

Toxic component of a type II toxin-antitoxin (TA) system, its cognate antitoxin is MazE1. Probably an endoribonuclease. This is Probable endoribonuclease MazF1 (mazF1) from Mycobacterium tuberculosis (strain ATCC 25618 / H37Rv).